A 461-amino-acid polypeptide reads, in one-letter code: Decaprenylphosphoryl-beta-D-ribose oxidase (461 aa).

The region spanning threonine 19 to threonine 194 is the FAD-binding PCMH-type domain. Residues alanine 53–asparagine 63, glycine 117, threonine 122–glycine 125, cysteine 129–histidine 132, isoleucine 184, and tyrosine 415 each bind FAD.

Belongs to the DprE1 family. As to quaternary structure, monomer. Although forming apparent dimer in crystals, DprE1 does not dimerize appreciably in solution. Interacts with DprE2 to form an epimerase complex.

The protein localises to the periplasm. The catalysed reaction is trans,octa-cis-decaprenylphospho-beta-D-ribofuranose + FAD + H(+) = trans,octa-cis-decaprenylphospho-beta-D-erythro-pentofuranosid-2-ulose + FADH2. It functions in the pathway cell wall biogenesis; cell wall polysaccharide biosynthesis. With respect to regulation, is inhibited by 8-nitro-benzothiazinones (BTZs) such as BTZ043 and PBTZ169; BTZs are a new class of antimycobacterial agents that kill M.tuberculosis in vitro, ex vivo, and in mouse models of tuberculosis. Is also inhibited by dinitrobenzamide derivatives (DNBs), which thus block formation of both cell-wall lipoarabinomannan and arabinogalactan via inhibition of decaprenyl-phospho-arabinose (DPA) synthesis; DNBs show high activity against intracellular growth of M.tuberculosis inside macrophages, including extensively drug resistant (XDR) strains. BTZs and DNBs are suicide inhibitors that act via covalent modification of DprE1; the essential nitro group of these compounds is reduced by DprE1 to a nitroso group, which then specifically reacts with Cys-387 of DprE1 to form an irreversible semimercaptal adduct. Many other compounds with diverse scaffolds were found to act as either covalent (e.g. nitroquinoxalines, nitroimidazoles) or non-covalent (e.g. the benzothiazole derivative TCA1, the 2-carboxyquinoxaline Ty38C, 8-pyrrole-benzothiazinones, 1,4-azaindoles, pyrazolopyridones, 4-aminoquinolone piperidine amides) DprE1 inhibitors. Its function is as follows. Component of the DprE1-DprE2 complex that catalyzes the 2-step epimerization of decaprenyl-phospho-ribose (DPR) to decaprenyl-phospho-arabinose (DPA), a key precursor that serves as the arabinose donor required for the synthesis of cell-wall arabinans. DprE1 catalyzes the first step of epimerization, namely FAD-dependent oxidation of the C2' hydroxyl of DPR to yield the keto intermediate decaprenyl-phospho-2'-keto-D-arabinose (DPX). The intermediate DPX is then transferred to DprE2 subunit of the epimerase complex, most probably through a 'substrate channel' at the interface of DprE1-DprE2 complex. Can also use farnesyl-phosphoryl-beta-D-ribofuranose (FPR) as substrate in vitro. In terms of biological role, dprE1 is a highly vulnerable and fully validated tuberculosis drug target. In Mycobacterium tuberculosis (strain CDC 1551 / Oshkosh), this protein is Decaprenylphosphoryl-beta-D-ribose oxidase.